Here is a 483-residue protein sequence, read N- to C-terminus: MAASETAPFGVSAASKGGGGVAGARAQHGQLAVAGRVHDALVFAAGAVAAVLVLLATASFLSPMPVTNLVAFRSLPVSVASTSAASAAIDADVGVRGGPGAAGRTFYDDSRVSYAVEVGRRGGITGWDARRAAWMRLRYPRGLNATAAGRERVVMVSGSQAPPCRGEGGDHLLLRFLKNKVDYCRLHGVELLYNNALLQPRMLAYWAKIPAVRAAMLAHPDAEWVWWVDADAVFTDMDFSLPLHKYKDHNLVVYGWNKEVYGERSWVGLNAGVFLIRNCQWSLDFMDSWARMGPASPEYARWGSVLHDTLRGKSDKESDDQSALVYLLSEHEEKWGAKTYLEKGYFFQGYWVEVVDRLDDIAARYEAAERRPSAAAAHLRRRHAEREHERYAAARNAAVRGAVPGPAGGGQSGWRRPFVTHFTGCQPCGGEPNKIYSKKSCADGMNRALNFADDQVLRNYGYRHKDPLSDEVRPLPFDYPAAR.

Over 1-40 (MAASETAPFGVSAASKGGGGVAGARAQHGQLAVAGRVHDA) the chain is Cytoplasmic. The chain crosses the membrane as a helical; Signal-anchor for type II membrane protein span at residues 41–61 (LVFAAGAVAAVLVLLATASFL). Over 62-483 (SPMPVTNLVA…PLPFDYPAAR (422 aa)) the chain is Lumenal. The N-linked (GlcNAc...) asparagine glycan is linked to Asn144.

It belongs to the glycosyltransferase 34 family.

The protein resides in the golgi apparatus membrane. Functionally, probable glycosyltransferase that may be involved in the biosynthesis of xyloglucan. The protein is Probable glycosyltransferase 6 of Oryza sativa subsp. indica (Rice).